A 305-amino-acid chain; its full sequence is Glycine--tRNA ligase alpha subunit (305 aa).

The protein belongs to the class-II aminoacyl-tRNA synthetase family. Tetramer of two alpha and two beta subunits.

It localises to the cytoplasm. The enzyme catalyses tRNA(Gly) + glycine + ATP = glycyl-tRNA(Gly) + AMP + diphosphate. The polypeptide is Glycine--tRNA ligase alpha subunit (Streptococcus suis (strain 98HAH33)).